The following is a 313-amino-acid chain: Intracellular endo-alpha-(1-&gt;5)-L-arabinanase (313 aa).

The active-site Proton acceptor is the Asp-27. Substrate is bound by residues Asp-27, Gly-105, 144–147 (NAID), and 164–166 (SFW). Residue Glu-201 is the Proton donor of the active site. Residue His-271 coordinates Ca(2+).

It belongs to the glycosyl hydrolase 43 family. In terms of assembly, monomer. Ca(2+) is required as a cofactor.

It localises to the cytoplasm. The catalysed reaction is Endohydrolysis of (1-&gt;5)-alpha-arabinofuranosidic linkages in (1-&gt;5)-arabinans.. Its pathway is glycan metabolism; L-arabinan degradation. Its function is as follows. Involved in the degradation of arabinan and is a key enzyme in the complete degradation of the plant cell wall. Catalyzes the cleavage of endo alpha-(1-&gt;5)-L-arabinofuranosyl residues in debranched arabinan. The polypeptide is Intracellular endo-alpha-(1-&gt;5)-L-arabinanase (abn-ts) (Geobacillus thermodenitrificans).